The primary structure comprises 283 residues: Circadian clock oscillator protein KaiA (283 aa).

The tract at residues 3-133 is psR domain, binds oxidized quinones; sequence QSTALTICGL…VKLCPGCAVP (131 aa). The region spanning 3 to 163 is the KaiA N-terminal domain; it reads QSTALTICGL…RLSQKLKERL (161 aa). Residues 164 to 172 form a flexible linker region; the sequence is GYLGVYYKR. Residues 173 to 281 enclose the KaiA C-terminal domain; that stretch reads DTAFFFRRMS…CEMYRRSIPR (109 aa).

Homodimer. The KaiABC complex composition changes during the circadian cycle to control KaiC phosphorylation. Complexes KaiC(6), KaiA(2-4):KaiC(6), KaiB(6):KaiC(6) and KaiC(6):KaiB(6):KaiA(12) are among the most important forms, many form cooperatively. KaiA and CikA bind to the same region of the KaiB(fs) form and therefore compete.

In terms of biological role, key component of the KaiABC oscillator complex, which constitutes the main circadian regulator in cyanobacteria. Complex composition changes during the circadian cycle to control KaiC phosphorylation. KaiA stimulates KaiC autophosphorylation, while KaiB sequesters KaiA, leading to KaiC autodephosphorylation. KaiA binding to the KaiC CII domain during the subjective day yields KaiA(2-4):KaiC(6) complexes which stimulate KaiC autophosphorylation. Phospho-Ser-431 KaiC accumulation triggers binding of KaiB during the subjective night to form the KaiB(6):KaiC(6) complex, leading to changes in the output regulators CikA and SasA. KaiB(6):KaiC(6) formation exposes a site for KaiA binding on KaiB that sequesters KaiA from KaiC's CII domain, making the KaiC(6):KaiB(6):KaiA(12) complex resulting in KaiC autodephosphorylation. Complete dephosphorylation of KaiC leads to dissociation of KaiA(2):KaiB(1), completing 1 cycle of the Kai oscillator. Binds oxidized quinones via the N-terminal PsR domain, allowing it to sense redox changes and possibly mediate clock input. This chain is Circadian clock oscillator protein KaiA, found in Thermostichus vulcanus (Synechococcus vulcanus).